The primary structure comprises 604 residues: Elongation factor 4 1 (604 aa).

Residues 10–191 (EHIRNFCIIA…AIVDSVPAPT (182 aa)) form the tr-type G domain. Residues 22-27 (DHGKST) and 138-141 (NKID) contribute to the GTP site.

Belongs to the TRAFAC class translation factor GTPase superfamily. Classic translation factor GTPase family. LepA subfamily.

It is found in the cell inner membrane. The catalysed reaction is GTP + H2O = GDP + phosphate + H(+). Functionally, required for accurate and efficient protein synthesis under certain stress conditions. May act as a fidelity factor of the translation reaction, by catalyzing a one-codon backward translocation of tRNAs on improperly translocated ribosomes. Back-translocation proceeds from a post-translocation (POST) complex to a pre-translocation (PRE) complex, thus giving elongation factor G a second chance to translocate the tRNAs correctly. Binds to ribosomes in a GTP-dependent manner. The chain is Elongation factor 4 1 from Rhodopirellula baltica (strain DSM 10527 / NCIMB 13988 / SH1).